A 391-amino-acid polypeptide reads, in one-letter code: Alanine racemase, biosynthetic (391 aa).

Residue lysine 52 is the Proton acceptor; specific for D-alanine of the active site. The residue at position 52 (lysine 52) is an N6-(pyridoxal phosphate)lysine. Arginine 149 provides a ligand contact to substrate. The active-site Proton acceptor; specific for L-alanine is tyrosine 271. Methionine 330 serves as a coordination point for substrate.

This sequence belongs to the alanine racemase family. Requires pyridoxal 5'-phosphate as cofactor.

The enzyme catalyses L-alanine = D-alanine. It functions in the pathway amino-acid biosynthesis; D-alanine biosynthesis; D-alanine from L-alanine: step 1/1. Its pathway is cell wall biogenesis; peptidoglycan biosynthesis. Catalyzes the interconversion of L-alanine and D-alanine. Provides the D-alanine required for cell wall biosynthesis. This Agrobacterium fabrum (strain C58 / ATCC 33970) (Agrobacterium tumefaciens (strain C58)) protein is Alanine racemase, biosynthetic (alr).